The primary structure comprises 37 residues: Cytochrome b6-f complex subunit 5 (37 aa).

Residues phenylalanine 5–alanine 25 form a helical membrane-spanning segment.

It belongs to the PetG family. In terms of assembly, the 4 large subunits of the cytochrome b6-f complex are cytochrome b6, subunit IV (17 kDa polypeptide, PetD), cytochrome f and the Rieske protein, while the 4 small subunits are PetG, PetL, PetM and PetN. The complex functions as a dimer.

It localises to the plastid. The protein resides in the chloroplast thylakoid membrane. Functionally, component of the cytochrome b6-f complex, which mediates electron transfer between photosystem II (PSII) and photosystem I (PSI), cyclic electron flow around PSI, and state transitions. PetG is required for either the stability or assembly of the cytochrome b6-f complex. This Daucus carota (Wild carrot) protein is Cytochrome b6-f complex subunit 5.